The following is a 317-amino-acid chain: MGAPKQRWTSEEEAALRAGIARHGVGKWRTILKDPEFSSTLCYRSNVDLKDKWRNMNVIVSTSSSRDKAKSALKRIRTIPKNNEHTMAITRVTSDIDDEIVDEKPIVSLPSEAKNTSSSKKSHRLDNIIMEAIKNLNEPTGSHRTTIANYIEEQYWPPSDFDHLLSAKLKDLSTSGKLIKVNRKYRIAPSSPNSERRSPKMPLLEDVQREPVKIWSDDTKTLTRSQVDAELARMATMTAEEASVAAARAVAEAEAIMAEAEAAAKEAEAAEAEAQAAQAFAEAAFLTLKNRNAGKLVIALIHASLCYILPCFISYHI.

The HTH myb-type domain maps to 1 to 61 (MGAPKQRWTS…KWRNMNVIVS (61 aa)). Positions 28–57 (WRTILKDPEFSSTLCYRSNVDLKDKWRNMN) form a DNA-binding region, H-T-H motif. The region spanning 121–189 (KSHRLDNIIM…KVNRKYRIAP (69 aa)) is the H15 domain. Positions 244–288 (VAAARAVAEAEAIMAEAEAAAKEAEAAEAEAQAAQAFAEAAFLTL) form a coiled coil.

This sequence belongs to the histone H1/H5 family. SMH subfamily. Forms a homodimer and heterodimers.

The protein resides in the nucleus. It localises to the chromosome. It is found in the nucleolus. The protein localises to the telomere. Functionally, binds preferentially double-stranded telomeric repeats, but may also bind to the single telomeric strand. The sequence is that of Single myb histone 6 (SMH6) from Zea mays (Maize).